We begin with the raw amino-acid sequence, 219 residues long: Orotate phosphoribosyltransferase (219 aa).

K26 is a 5-phospho-alpha-D-ribose 1-diphosphate binding site. 34 to 35 serves as a coordination point for orotate; sequence FF. 5-phospho-alpha-D-ribose 1-diphosphate is bound by residues 72 to 73, R98, K99, K102, H104, and 124 to 132; these read YK and DDVITAGTA. Orotate contacts are provided by T128 and R156.

Belongs to the purine/pyrimidine phosphoribosyltransferase family. PyrE subfamily. Homodimer. Requires Mg(2+) as cofactor.

It catalyses the reaction orotidine 5'-phosphate + diphosphate = orotate + 5-phospho-alpha-D-ribose 1-diphosphate. The protein operates within pyrimidine metabolism; UMP biosynthesis via de novo pathway; UMP from orotate: step 1/2. Catalyzes the transfer of a ribosyl phosphate group from 5-phosphoribose 1-diphosphate to orotate, leading to the formation of orotidine monophosphate (OMP). This chain is Orotate phosphoribosyltransferase, found in Xylella fastidiosa (strain Temecula1 / ATCC 700964).